We begin with the raw amino-acid sequence, 185 residues long: UPF0149 protein PD_0802 (185 aa).

Belongs to the UPF0149 family.

This is UPF0149 protein PD_0802 from Xylella fastidiosa (strain Temecula1 / ATCC 700964).